Consider the following 178-residue polypeptide: Translation initiation factor IF-3 (178 aa).

This sequence belongs to the IF-3 family. In terms of assembly, monomer.

The protein resides in the cytoplasm. In terms of biological role, IF-3 binds to the 30S ribosomal subunit and shifts the equilibrium between 70S ribosomes and their 50S and 30S subunits in favor of the free subunits, thus enhancing the availability of 30S subunits on which protein synthesis initiation begins. The protein is Translation initiation factor IF-3 of Legionella pneumophila (strain Paris).